The chain runs to 245 residues: 1-(5-phosphoribosyl)-5-[(5-phosphoribosylamino)methylideneamino] imidazole-4-carboxamide isomerase (245 aa).

Asp-7 acts as the Proton acceptor in catalysis. Asp-129 serves as the catalytic Proton donor.

It belongs to the HisA/HisF family.

It is found in the cytoplasm. The enzyme catalyses 1-(5-phospho-beta-D-ribosyl)-5-[(5-phospho-beta-D-ribosylamino)methylideneamino]imidazole-4-carboxamide = 5-[(5-phospho-1-deoxy-D-ribulos-1-ylimino)methylamino]-1-(5-phospho-beta-D-ribosyl)imidazole-4-carboxamide. It participates in amino-acid biosynthesis; L-histidine biosynthesis; L-histidine from 5-phospho-alpha-D-ribose 1-diphosphate: step 4/9. This chain is 1-(5-phosphoribosyl)-5-[(5-phosphoribosylamino)methylideneamino] imidazole-4-carboxamide isomerase, found in Vibrio campbellii (strain ATCC BAA-1116).